Here is a 204-residue protein sequence, read N- to C-terminus: MRG/MORF4L-binding protein (204 aa).

Residues 1–15 (MGEAEVGGTGAPGDK) are compositionally biased toward gly residues. Residues 1–27 (MGEAEVGGTGAPGDKGPGEAAPSPAEE) form a disordered region. Position 2 is an N-acetylglycine (Gly-2). Ser-23 is modified (phosphoserine). Lys-127 participates in a covalent cross-link: Glycyl lysine isopeptide (Lys-Gly) (interchain with G-Cter in SUMO2). Composition is skewed to basic and acidic residues over residues 128–140 (EEMK…HSGA) and 153–175 (ALEK…EGAD). Residues 128–204 (EEMKEDVDPH…SPSAAKRRRT (77 aa)) are disordered. Positions 189 to 198 (ANSNPSSPSA) are enriched in low complexity. Phosphoserine occurs at positions 191 and 195.

This sequence belongs to the EAF7 family. In terms of assembly, component of the NuA4 histone acetyltransferase complex which contains the catalytic subunit KAT5/TIP60 and the subunits EP400, TRRAP/PAF400, BRD8/SMAP, EPC1, DMAP1/DNMAP1, RUVBL1/TIP49, RUVBL2, ING3, actin, ACTL6A/BAF53A, MORF4L1/MRG15, MORF4L2/MRGX, MRGBP, YEATS4/GAS41, VPS72/YL1 and MEAF6. MRGBP may interact directly with MORF4L1/MRG15 and MORF4L2/MRGX.

Its subcellular location is the nucleus. Functionally, component of the NuA4 histone acetyltransferase (HAT) complex which is involved in transcriptional activation of select genes principally by acetylation of nucleosomal histones H4 and H2A. This modification may both alter nucleosome - DNA interactions and promote interaction of the modified histones with other proteins which positively regulate transcription. This complex may be required for the activation of transcriptional programs associated with oncogene and proto-oncogene mediated growth induction, tumor suppressor mediated growth arrest and replicative senescence, apoptosis, and DNA repair. NuA4 may also play a direct role in DNA repair when recruited to sites of DNA damage. This is MRG/MORF4L-binding protein (Mrgbp) from Mus musculus (Mouse).